A 511-amino-acid polypeptide reads, in one-letter code: Inactive cytochrome P450 monooxygenase cloA (511 aa).

The chain crosses the membrane as a helical span at residues 17–37; sequence ILLTAGLCVPCALVIHGIYNL. Residues N81 and N344 are each glycosylated (N-linked (GlcNAc...) asparagine). Position 450 (C450) interacts with heme.

Belongs to the cytochrome P450 family. It depends on heme as a cofactor.

The protein localises to the membrane. Functionally, inactive cytochrome P450 monooxygenase; part of the gene cluster that mediates the biosynthesis of fungal ergot alkaloid. DmaW catalyzes the first step of ergot alkaloid biosynthesis by condensing dimethylallyl diphosphate (DMAP) and tryptophan to form 4-dimethylallyl-L-tryptophan. The second step is catalyzed by the methyltransferase easF that methylates 4-dimethylallyl-L-tryptophan in the presence of S-adenosyl-L-methionine, resulting in the formation of 4-dimethylallyl-L-abrine. The catalase easC and the FAD-dependent oxidoreductase easE then transform 4-dimethylallyl-L-abrine to chanoclavine-I which is further oxidized by easD in the presence of NAD(+), resulting in the formation of chanoclavine-I aldehyde. Agroclavine dehydrogenase easG then mediates the conversion of chanoclavine-I aldehyde to agroclavine via a non-enzymatic adduct reaction: the substrate is an iminium intermediate that is formed spontaneously from chanoclavine-I aldehyde in the presence of glutathione. Further conversion of agroclavine to paspalic acid is a two-step process involving oxidation of agroclavine to elymoclavine and of elymoclavine to paspalic acid, the second step being performed by the elymoclavine oxidase cloA. However, cloA does not encode a functional enzyme indicating that C.fusiformis terminates its ergot alkaloid pathway at elymoclavine. This is Inactive cytochrome P450 monooxygenase cloA from Claviceps fusiformis (Ergot fungus).